A 298-amino-acid chain; its full sequence is Ethanolamine ammonia-lyase small subunit (298 aa).

3 residues coordinate adenosylcob(III)alamin: valine 210, glutamate 231, and cysteine 261.

It belongs to the EutC family. As to quaternary structure, the basic unit is a heterodimer which dimerizes to form tetramers. The heterotetramers trimerize; 6 large subunits form a core ring with 6 small subunits projecting outwards. Requires adenosylcob(III)alamin as cofactor.

The protein resides in the bacterial microcompartment. The enzyme catalyses ethanolamine = acetaldehyde + NH4(+). It functions in the pathway amine and polyamine degradation; ethanolamine degradation. Functionally, catalyzes the deamination of various vicinal amino-alcohols to oxo compounds. Allows this organism to utilize ethanolamine as the sole source of nitrogen and carbon in the presence of external vitamin B12. The sequence is that of Ethanolamine ammonia-lyase small subunit from Salmonella dublin (strain CT_02021853).